A 194-amino-acid polypeptide reads, in one-letter code: Putative manganese efflux pump MntP (194 aa).

A run of 6 helical transmembrane segments spans residues P3–G23, L37–L57, D69–L89, L110–F132, C147–G167, and I172–A192.

This sequence belongs to the MntP (TC 9.B.29) family.

It localises to the cell inner membrane. Probably functions as a manganese efflux pump. This Xanthomonas oryzae pv. oryzae (strain MAFF 311018) protein is Putative manganese efflux pump MntP.